We begin with the raw amino-acid sequence, 152 residues long: Actin-depolymerizing factor 2, isoform c (152 aa).

An ADF-H domain is found at 4–147 (GVKVDPSCKN…DEKSVKSDLM (144 aa)).

This sequence belongs to the actin-binding proteins ADF family.

Its function is as follows. Depolymerizes growing actin filaments in muscle cells; required for the assembly of actin filaments into the functional contractile myofilament lattice of muscle. The protein is Actin-depolymerizing factor 2, isoform c of Caenorhabditis elegans.